Reading from the N-terminus, the 392-residue chain is Formate-dependent phosphoribosylglycinamide formyltransferase (392 aa).

Residues 22–23 (EL) and Glu-82 each bind N(1)-(5-phospho-beta-D-ribosyl)glycinamide. ATP is bound by residues Arg-114, Lys-155, 160-165 (SSGKGQ), 195-198 (EGVV), and Glu-203. The 190-residue stretch at 119 to 308 (RLAAEELGLP…EFALHVRAFL (190 aa)) folds into the ATP-grasp domain. Mg(2+)-binding residues include Glu-267 and Glu-279. N(1)-(5-phospho-beta-D-ribosyl)glycinamide contacts are provided by residues Asp-286, Lys-355, and 362 to 363 (RR).

This sequence belongs to the PurK/PurT family. As to quaternary structure, homodimer.

It catalyses the reaction N(1)-(5-phospho-beta-D-ribosyl)glycinamide + formate + ATP = N(2)-formyl-N(1)-(5-phospho-beta-D-ribosyl)glycinamide + ADP + phosphate + H(+). Its pathway is purine metabolism; IMP biosynthesis via de novo pathway; N(2)-formyl-N(1)-(5-phospho-D-ribosyl)glycinamide from N(1)-(5-phospho-D-ribosyl)glycinamide (formate route): step 1/1. Its function is as follows. Involved in the de novo purine biosynthesis. Catalyzes the transfer of formate to 5-phospho-ribosyl-glycinamide (GAR), producing 5-phospho-ribosyl-N-formylglycinamide (FGAR). Formate is provided by PurU via hydrolysis of 10-formyl-tetrahydrofolate. This is Formate-dependent phosphoribosylglycinamide formyltransferase from Cronobacter sakazakii (strain ATCC BAA-894) (Enterobacter sakazakii).